The following is a 177-amino-acid chain: Prorelaxin (177 aa).

The first 25 residues, 1–25 (MLRWFLSHLLGVWLLLSQLPREIPA), serve as a signal peptide directing secretion. 3 disulfide bridges follow: cysteine 34–cysteine 164, cysteine 46–cysteine 177, and cysteine 163–cysteine 168. A propeptide spans 63–149 (QISEPLAEVV…KSLSKLDKHP (87 aa)) (connecting peptide).

This sequence belongs to the insulin family. As to quaternary structure, heterodimer of a B chain and an A chain linked by two disulfide bonds. As to expression, placenta; syncytiotrophoblast.

The protein localises to the secreted. In terms of biological role, relaxin is an ovarian hormone that acts with estrogen to produce dilatation of the birth canal in many mammals. This is Prorelaxin (RLN) from Canis lupus familiaris (Dog).